A 392-amino-acid polypeptide reads, in one-letter code: Chalcone synthase B (392 aa).

C167 is an active-site residue.

The protein belongs to the thiolase-like superfamily. Chalcone/stilbene synthases family. Expressed at low level in seedlings after illumination with UV light. No expression in flowers or tissue culture.

The catalysed reaction is (E)-4-coumaroyl-CoA + 3 malonyl-CoA + 3 H(+) = 2',4,4',6'-tetrahydroxychalcone + 3 CO2 + 4 CoA. It participates in secondary metabolite biosynthesis; flavonoid biosynthesis. In terms of biological role, the primary product of this enzyme is 4,2',4',6'-tetrahydroxychalcone (also termed naringenin-chalcone or chalcone) which can under specific conditions spontaneously isomerize into naringenin. This Petunia hybrida (Petunia) protein is Chalcone synthase B (CHSB).